Consider the following 883-residue polypeptide: Phosphoenolpyruvate carboxylase (883 aa).

Catalysis depends on residues His-138 and Lys-546.

This sequence belongs to the PEPCase type 1 family. Mg(2+) is required as a cofactor.

The catalysed reaction is oxaloacetate + phosphate = phosphoenolpyruvate + hydrogencarbonate. Its function is as follows. Forms oxaloacetate, a four-carbon dicarboxylic acid source for the tricarboxylic acid cycle. In Shigella flexneri, this protein is Phosphoenolpyruvate carboxylase.